We begin with the raw amino-acid sequence, 323 residues long: Probable cell division protein WhiA (323 aa).

Residues 275-309 (TLKELGEMLTTGQVSKSGINHRLRKLDQIAERLRS) constitute a DNA-binding region (H-T-H motif).

Belongs to the WhiA family.

Involved in cell division and chromosome segregation. The chain is Probable cell division protein WhiA from Listeria innocua serovar 6a (strain ATCC BAA-680 / CLIP 11262).